The following is a 236-amino-acid chain: Thiamine import ATP-binding protein ThiQ (236 aa).

Positions 2–230 (LKLEKITYLY…SAAKASVLGI (229 aa)) constitute an ABC transporter domain. 32-39 (GPSGAGKS) contacts ATP.

It belongs to the ABC transporter superfamily. Thiamine importer (TC 3.A.1.19.1) family. As to quaternary structure, the complex is composed of two ATP-binding proteins (ThiQ), two transmembrane proteins (ThiP) and a solute-binding protein (ThiB).

It is found in the cell inner membrane. The catalysed reaction is thiamine(out) + ATP + H2O = thiamine(in) + ADP + phosphate + H(+). Part of the ABC transporter complex ThiBPQ involved in thiamine import. Responsible for energy coupling to the transport system. This chain is Thiamine import ATP-binding protein ThiQ, found in Yersinia pseudotuberculosis serotype I (strain IP32953).